We begin with the raw amino-acid sequence, 560 residues long: Putative protease Do-like 11, mitochondrial (560 aa).

Residues 1-65 (MFFRPCVHTV…RRSSTSAAER (65 aa)) constitute a mitochondrion transit peptide. The tract at residues 117–302 (TEYSKSKPWK…ESRQYSCFGS (186 aa)) is serine protease. Catalysis depends on charge relay system residues His150, Asp184, and Ser258. The 97-residue stretch at 288–384 (ITSVQESRQY…YLVSMKKPGE (97 aa)) folds into the PDZ domain.

Belongs to the peptidase S1C family.

It is found in the mitochondrion membrane. In terms of biological role, putative serine protease. This chain is Putative protease Do-like 11, mitochondrial (DEGP11), found in Arabidopsis thaliana (Mouse-ear cress).